Consider the following 535-residue polypeptide: CTP synthase (535 aa).

Positions 1–270 are amidoligase domain; it reads MSKNTKYVFV…DRLVCEKLGL (270 aa). Ser-16 lines the CTP pocket. Position 16 (Ser-16) interacts with UTP. Residue 17-22 coordinates ATP; it reads SLGKGI. Residue Tyr-57 participates in L-glutamine binding. Asp-74 provides a ligand contact to ATP. The Mg(2+) site is built by Asp-74 and Glu-144. CTP-binding positions include 151–153, 191–196, and Lys-227; these read DIE and KTKPTQ. Residues 191–196 and Lys-227 contribute to the UTP site; that span reads KTKPTQ. The Glutamine amidotransferase type-1 domain occupies 295-535; sequence KIALVGKYVE…GFVGAALNNK (241 aa). An L-glutamine-binding site is contributed by Gly-357. Cys-384 functions as the Nucleophile; for glutamine hydrolysis in the catalytic mechanism. L-glutamine is bound by residues 385–388, Glu-408, and Arg-465; that span reads LGMQ. Active-site residues include His-510 and Glu-512.

It belongs to the CTP synthase family. As to quaternary structure, homotetramer.

It carries out the reaction UTP + L-glutamine + ATP + H2O = CTP + L-glutamate + ADP + phosphate + 2 H(+). The catalysed reaction is L-glutamine + H2O = L-glutamate + NH4(+). It catalyses the reaction UTP + NH4(+) + ATP = CTP + ADP + phosphate + 2 H(+). It functions in the pathway pyrimidine metabolism; CTP biosynthesis via de novo pathway; CTP from UDP: step 2/2. With respect to regulation, allosterically activated by GTP, when glutamine is the substrate; GTP has no effect on the reaction when ammonia is the substrate. The allosteric effector GTP functions by stabilizing the protein conformation that binds the tetrahedral intermediate(s) formed during glutamine hydrolysis. Inhibited by the product CTP, via allosteric rather than competitive inhibition. Catalyzes the ATP-dependent amination of UTP to CTP with either L-glutamine or ammonia as the source of nitrogen. Regulates intracellular CTP levels through interactions with the four ribonucleotide triphosphates. The protein is CTP synthase of Clostridium perfringens (strain ATCC 13124 / DSM 756 / JCM 1290 / NCIMB 6125 / NCTC 8237 / Type A).